We begin with the raw amino-acid sequence, 383 residues long: Chorismate synthase (383 aa).

Residues R40 and R46 each coordinate NADP(+). FMN-binding positions include 128–130, G291, 306–310, and R332; these read RAS and KPIPT.

The protein belongs to the chorismate synthase family. As to quaternary structure, homotetramer. FMNH2 serves as cofactor.

The catalysed reaction is 5-O-(1-carboxyvinyl)-3-phosphoshikimate = chorismate + phosphate. It participates in metabolic intermediate biosynthesis; chorismate biosynthesis; chorismate from D-erythrose 4-phosphate and phosphoenolpyruvate: step 7/7. Functionally, catalyzes the anti-1,4-elimination of the C-3 phosphate and the C-6 proR hydrogen from 5-enolpyruvylshikimate-3-phosphate (EPSP) to yield chorismate, which is the branch point compound that serves as the starting substrate for the three terminal pathways of aromatic amino acid biosynthesis. This reaction introduces a second double bond into the aromatic ring system. The chain is Chorismate synthase from Moorella thermoacetica (strain ATCC 39073 / JCM 9320).